A 45-amino-acid polypeptide reads, in one-letter code: Large ribosomal subunit protein bL34 (45 aa).

The interval Arg-26–Ala-45 is disordered.

The protein belongs to the bacterial ribosomal protein bL34 family.

The chain is Large ribosomal subunit protein bL34 from Parafrankia sp. (strain EAN1pec).